The following is a 323-amino-acid chain: MNSSCCPSSSYPTLPNLSQHPAAPSASNRSGSGFCEQVFIKPEVFLALGIVSLMENILVILAVVRNGNLHSPMYFFLCSLAAADMLVSLSNSLETIMIVVINSDSLTLEDQFIQHMDNIFDSMICISLVASICNLLAIAVDRYVTIFYALRYHSIMTVRKALSLIVAIWVCCGICGVMFIVYSESKMVIVCLITMFFAMVLLMGTLYIHMFLFARLHVQRIAALPPADGVAPQQHSCMKGAVTITILLGVFIFCWAPFFLHLVLIITCPTNPYCICYTAHFNTYLVLIMCNSVIDPLIYAFRSLELRNTFKEILCGCNGMNVG.

Over 1–37 (MNSSCCPSSSYPTLPNLSQHPAAPSASNRSGSGFCEQ) the chain is Extracellular. Asn-2, Asn-16, and Asn-28 each carry an N-linked (GlcNAc...) asparagine glycan. The helical transmembrane segment at 38–63 (VFIKPEVFLALGIVSLMENILVILAV) threads the bilayer. Residues 64-75 (VRNGNLHSPMYF) are Cytoplasmic-facing. Residues 76–100 (FLCSLAAADMLVSLSNSLETIMIVV) form a helical membrane-spanning segment. The Extracellular portion of the chain corresponds to 101 to 118 (INSDSLTLEDQFIQHMDN). A helical transmembrane segment spans residues 119 to 140 (IFDSMICISLVASICNLLAIAV). Residues 141 to 160 (DRYVTIFYALRYHSIMTVRK) are Cytoplasmic-facing. Residues 161 to 181 (ALSLIVAIWVCCGICGVMFIV) form a helical membrane-spanning segment. Residues 182–186 (YSESK) lie on the Extracellular side of the membrane. The helical transmembrane segment at 187-210 (MVIVCLITMFFAMVLLMGTLYIHM) threads the bilayer. Over 211-245 (FLFARLHVQRIAALPPADGVAPQQHSCMKGAVTIT) the chain is Cytoplasmic. The chain crosses the membrane as a helical span at residues 246-268 (ILLGVFIFCWAPFFLHLVLIITC). Residues 269–277 (PTNPYCICY) are Extracellular-facing. The chain crosses the membrane as a helical span at residues 278–301 (TAHFNTYLVLIMCNSVIDPLIYAF). At 302–323 (RSLELRNTFKEILCGCNGMNVG) the chain is on the cytoplasmic side. The S-palmitoyl cysteine moiety is linked to residue Cys-315.

This sequence belongs to the G-protein coupled receptor 1 family. As to expression, brain.

Its subcellular location is the cell membrane. In terms of biological role, receptor for MSH (alpha, beta and gamma) and ACTH. This receptor is mediated by G proteins which activate adenylate cyclase. Required for expression of anticipatory patterns of activity and wakefulness during periods of limited nutrient availability and for the normal regulation of circadian clock activity in the brain. The protein is Melanocortin receptor 3 (Mc3r) of Rattus norvegicus (Rat).